The chain runs to 141 residues: Putative phosphatidylglycerol/phosphatidylinositol transfer protein DDB_G0278295 (141 aa).

The N-terminal stretch at 1–19 (MRLLLALFFVLALVSPSFT) is a signal peptide. 2 N-linked (GlcNAc...) asparagine glycosylation sites follow: N82 and N104.

Belongs to the NPC2 family. Monomer.

Its function is as follows. Catalyzes the intermembrane transfer of phosphatidylglycerol and phosphatidylinositol. This chain is Putative phosphatidylglycerol/phosphatidylinositol transfer protein DDB_G0278295, found in Dictyostelium discoideum (Social amoeba).